A 515-amino-acid polypeptide reads, in one-letter code: 1-pyrroline-5-carboxylate dehydrogenase (515 aa).

Residues E286 and C320 contribute to the active site.

This sequence belongs to the aldehyde dehydrogenase family. RocA subfamily.

The enzyme catalyses L-glutamate 5-semialdehyde + NAD(+) + H2O = L-glutamate + NADH + 2 H(+). It participates in amino-acid degradation; L-proline degradation into L-glutamate; L-glutamate from L-proline: step 2/2. The polypeptide is 1-pyrroline-5-carboxylate dehydrogenase (Geobacillus sp. (strain WCH70)).